The chain runs to 207 residues: NAD(P)H-quinone oxidoreductase subunit K, chloroplastic (207 aa).

4 residues coordinate [4Fe-4S] cluster: C47, C48, C112, and C143.

This sequence belongs to the complex I 20 kDa subunit family. In terms of assembly, NDH is composed of at least 16 different subunits, 5 of which are encoded in the nucleus. [4Fe-4S] cluster serves as cofactor.

Its subcellular location is the plastid. It localises to the chloroplast thylakoid membrane. The enzyme catalyses a plastoquinone + NADH + (n+1) H(+)(in) = a plastoquinol + NAD(+) + n H(+)(out). It catalyses the reaction a plastoquinone + NADPH + (n+1) H(+)(in) = a plastoquinol + NADP(+) + n H(+)(out). Functionally, NDH shuttles electrons from NAD(P)H:plastoquinone, via FMN and iron-sulfur (Fe-S) centers, to quinones in the photosynthetic chain and possibly in a chloroplast respiratory chain. The immediate electron acceptor for the enzyme in this species is believed to be plastoquinone. Couples the redox reaction to proton translocation, and thus conserves the redox energy in a proton gradient. In Psilotum nudum (Whisk fern), this protein is NAD(P)H-quinone oxidoreductase subunit K, chloroplastic.